We begin with the raw amino-acid sequence, 1260 residues long: MLQQFTLLFLYLSIASAKTITGVFDSFNSLTWSNAANYAFKGPGYPTWNAVLGWSLDGTSANPGDTFTLNMPCVFKYTTSQTSVDLTADGVKYATCQFYSGEEFTTFSTLTCTVNDALKSSIKAFGTVTLPIAFNVGGTGSSTDLEDSKCFTAGTNTVTFNDGDKDISIDVEFEKSTVDPSGYLYASRVMPSLNKVTTLFVAPQCENGYTSGTMGFSSSNGDVAIDCSNIHIGITKGLNDWNYPVSSESFSYTKTCTSNGIQIKYQNVPAGYRPFIDAYISATDVNQYTLAYTNDYTCAGSRSQSKPFTLRWTGYKNSDAGSNGIVIVATTRTVTDSTTAVTTLPFNPSVDKTKTIEILQPIPTTTITTSYVGVTTSYSTKTAPIGETATVIVDVPYHTTTTVTSEWTGTITTTTTRTNPTDSIDTVVVQVPSPNPTVSTTEYWSQSYATTTTVTAPPGGTDTVIIREPPNHTVTTTEYWSQSFATTTTVTAPPGETDTVIIREPPNHTVTTTEYWSQSYATTTTVTAPPGGTDTVLIREPPNHTVTTTEYWSQSYATTTTVTAPPGGTDTVIIREPPNYTVTTTEYWSQSYATTTTITAPPGETDTVIIREPPNHTVTTTEYWSQSYATTTTVTAPPGGTDTVLIREPPNHTVTTTEYWSQSYATTTTVTAPPGGTDTVLIREPPNHTVTTTEYWSQSYATTTTVTAPPGGTDTVIIREPPNHTVTTTEYWSQSYATTTTVTAPPGGTDTVIIREPPNYTVTTTEYWSQSFATTTTVTAPPGGTDTVIIYESMSSSKISTSSNDITSIIPSFSRPHYVNSTTSDLSTFESSSMNTPTSISSDGMLLSSTTLVTESETTTESICSDGKECSRLSSSSGIVTNPDSNESSIVTSTVPTASTMSDSLSSTDGISATSSDNVSKSGVSVTTETSVTTIQTTPNPLSSSVTSLTQLSSIPSVSESESKVTFTSNGDNQSGTHDSQSTSTEIEIVTTSSTKVLPPVVSSNTDLTSEPTNTREQPTTLSTTSNSITEDITTSQPTGDNGDNTSSTNPVPTVATSTLASASEEDNKSGSHESASTSLKPSMGENSGLTTSTEIEATTTSPTEAPSPAVSSGTDVTTEPTDTREQPTTLSTTSKTNSESVATTQATNENGGKSPSTDLTSSLTTGTSASTSANSELVTSGSVTGGAVASASNDQSHSTSVTNSNSIVSNTPQTTLSQQVTSSSPSTNTFIASTYDGSGSIIQHSTWLYGLITLLSLFI.

A signal peptide spans 1–17 (MLQQFTLLFLYLSIASA). Disulfide bonds link cysteine 73/cysteine 150, cysteine 96/cysteine 112, cysteine 205/cysteine 298, and cysteine 227/cysteine 256. 3 ALS repeats span residues 365–396 (TTITTSYVGVTTSYSTKTAPIGETATVIVDVP), 401–432 (TTVTSEWTGTITTTTTRTNPTDSIDTVVVQVP), and 438–469 (VSTTEYWSQSYATTTTVTAPPGGTDTVIIREP). N-linked (GlcNAc...) asparagine glycosylation occurs at asparagine 471. Residues 474–505 (VTTTEYWSQSFATTTTVTAPPGETDTVIIREP) form an ALS 4 repeat. Asparagine 507 carries an N-linked (GlcNAc...) asparagine glycan. The ALS 5 repeat unit spans residues 510–541 (VTTTEYWSQSYATTTTVTAPPGGTDTVLIREP). The N-linked (GlcNAc...) asparagine glycan is linked to asparagine 543. Residues 546 to 577 (VTTTEYWSQSYATTTTVTAPPGGTDTVIIREP) form an ALS 6 repeat. A glycan (N-linked (GlcNAc...) asparagine) is linked at asparagine 579. An ALS 7 repeat occupies 582–613 (VTTTEYWSQSYATTTTITAPPGETDTVIIREP). N-linked (GlcNAc...) asparagine glycosylation is present at asparagine 615. An ALS 8 repeat occupies 618–649 (VTTTEYWSQSYATTTTVTAPPGGTDTVLIREP). The N-linked (GlcNAc...) asparagine glycan is linked to asparagine 651. An ALS 9 repeat occupies 654 to 685 (VTTTEYWSQSYATTTTVTAPPGGTDTVLIREP). Asparagine 687 carries an N-linked (GlcNAc...) asparagine glycan. An ALS 10 repeat occupies 690-721 (VTTTEYWSQSYATTTTVTAPPGGTDTVIIREP). Asparagine 723 carries an N-linked (GlcNAc...) asparagine glycan. Residues 726-757 (VTTTEYWSQSYATTTTVTAPPGGTDTVIIREP) form an ALS 11 repeat. N-linked (GlcNAc...) asparagine glycosylation is present at asparagine 759. An ALS 12 repeat occupies 762-791 (VTTTEYWSQSFATTTTVTAPPGGTDTVIIY). Asparagine 820, asparagine 886, asparagine 918, and asparagine 973 each carry an N-linked (GlcNAc...) asparagine glycan. Polar residues-rich tracts occupy residues 896–918 (PTASTMSDSLSSTDGISATSSDN) and 964–979 (KVTFTSNGDNQSGTHD). Disordered stretches follow at residues 896–924 (PTASTMSDSLSSTDGISATSSDNVSKSGV) and 954–1226 (SIPS…SSSP). The span at 980–995 (SQSTSTEIEIVTTSST) shows a compositional bias: low complexity. The segment covering 1002-1062 (VSSNTDLTSE…PTVATSTLAS (61 aa)) has biased composition (polar residues). N-linked (GlcNAc...) asparagine glycosylation is found at asparagine 1045 and asparagine 1068. Polar residues predominate over residues 1073-1090 (HESASTSLKPSMGENSGL). Over residues 1091-1110 (TTSTEIEATTTSPTEAPSPA) the composition is skewed to low complexity. Polar residues predominate over residues 1111 to 1154 (VSSGTDVTTEPTDTREQPTTLSTTSKTNSESVATTQATNENGGK). 2 stretches are compositionally biased toward low complexity: residues 1155-1176 (SPSTDLTSSLTTGTSASTSANS) and 1197-1226 (SHSTSVTNSNSIVSNTPQTTLSQQVTSSSP). Glycine 1238 is lipidated: GPI-anchor amidated glycine. The propeptide at 1239-1260 (SGSIIQHSTWLYGLITLLSLFI) is removed in mature form.

The protein belongs to the ALS family. In terms of processing, the GPI-anchor is attached to the protein in the endoplasmic reticulum and serves to target the protein to the cell surface. There, the glucosamine-inositol phospholipid moiety is cleaved off and the GPI-modified mannoprotein is covalently attached via its lipidless GPI glycan remnant to the 1,6-beta-glucan of the outer cell wall layer.

It is found in the cell membrane. The protein localises to the secreted. Its subcellular location is the cell wall. In terms of biological role, major cell surface adhesion protein which mediates both yeast-to-host tissue adherence and yeast aggregation. Acts as a downstream effector of the EFG1 regulatory pathway. Required for rapamycin-induced aggregation of C.albicans. Binds glycans and mediates adherence to endothelial and epithelial cells, thereby playing an important role in the pathogenesis of C.albicans infections. The chain is Agglutinin-like protein 1 (ALS1) from Candida albicans (strain SC5314 / ATCC MYA-2876) (Yeast).